The chain runs to 307 residues: Methionyl-tRNA formyltransferase (307 aa).

A (6S)-5,6,7,8-tetrahydrofolate-binding site is contributed by 108–111 (SLLP).

Belongs to the Fmt family.

It catalyses the reaction L-methionyl-tRNA(fMet) + (6R)-10-formyltetrahydrofolate = N-formyl-L-methionyl-tRNA(fMet) + (6S)-5,6,7,8-tetrahydrofolate + H(+). Attaches a formyl group to the free amino group of methionyl-tRNA(fMet). The formyl group appears to play a dual role in the initiator identity of N-formylmethionyl-tRNA by promoting its recognition by IF2 and preventing the misappropriation of this tRNA by the elongation apparatus. This chain is Methionyl-tRNA formyltransferase, found in Xylella fastidiosa (strain M12).